The chain runs to 203 residues: Microtubule-associated protein Jupiter (203 aa).

Ser-30 carries the phosphoserine modification. Phosphothreonine occurs at positions 41 and 102. Positions 123 to 132 (LISKGNYNGK) are enriched in polar residues. Disordered regions lie at residues 123-163 (LISK…GNPV) and 182-203 (NGGS…SGLW). Residues 133–146 (SGSVSSASSSVSSS) are compositionally biased toward low complexity. A phosphoserine mark is found at Ser-135 and Ser-146.

This sequence belongs to the MAP Jupiter family.

Its subcellular location is the nucleus. The protein localises to the cytoplasm. It is found in the cytoskeleton. The protein resides in the spindle. Functionally, binds to all microtubule populations. The protein is Microtubule-associated protein Jupiter of Drosophila mojavensis (Fruit fly).